A 666-amino-acid chain; its full sequence is Protein SLY1 (666 aa).

A run of 4 repeats spans residues lysine 106 to glutamine 142, lysine 220 to glutamate 257, leucine 436 to glutamate 474, and lysine 478 to aspartate 514. The 4 X approximate repeats stretch occupies residues lysine 106–aspartate 514.

It belongs to the STXBP/unc-18/SEC1 family. Interacts with SED5.

It localises to the cytoplasm. The protein resides in the membrane. In terms of biological role, able to suppress the functional loss of YPT1. SLY1 is essential for cell viability. May interact indirectly, or directly with YPT1. The chain is Protein SLY1 (SLY1) from Saccharomyces cerevisiae (strain ATCC 204508 / S288c) (Baker's yeast).